Here is a 143-residue protein sequence, read N- to C-terminus: Actin-depolymerizing factor 5 (143 aa).

The region spanning 11–143 (GMRVTDECTS…GFDIIQDRAK (133 aa)) is the ADF-H domain.

It belongs to the actin-binding proteins ADF family. Expressed exclusively in root tip meristem.

The protein localises to the cytoplasm. It is found in the cytoskeleton. Functionally, actin-depolymerizing protein. Severs actin filaments (F-actin) and binds to actin monomers. This is Actin-depolymerizing factor 5 (ADF5) from Arabidopsis thaliana (Mouse-ear cress).